We begin with the raw amino-acid sequence, 131 residues long: MRHRKSGRQLNRNSSHRQAMFRNMASSLVRHEIIKTTVAKAKELRRVVEPLITLAKSDSVANRRLAFARTRDAEVVGKLFTELGPRYQERPGGYTRILKCGLRAGDKAPMAYIELVGRPEAAQAVDVEAAE.

Belongs to the bacterial ribosomal protein bL17 family. Part of the 50S ribosomal subunit. Contacts protein L32.

In Shewanella oneidensis (strain ATCC 700550 / JCM 31522 / CIP 106686 / LMG 19005 / NCIMB 14063 / MR-1), this protein is Large ribosomal subunit protein bL17.